Reading from the N-terminus, the 189-residue chain is Lipid A acyltransferase PagP (189 aa).

An N-terminal signal peptide occupies residues 1 to 23; that stretch reads MRLKLILYFLILSCYLGIGSARA. Residues histidine 61, aspartate 104, and serine 105 contribute to the active site.

Belongs to the lipid A palmitoyltransferase family. Homodimer.

The protein localises to the cell outer membrane. The catalysed reaction is a lipid A + a 1,2-diacyl-sn-glycero-3-phosphocholine = a hepta-acyl lipid A + a 2-acyl-sn-glycero-3-phosphocholine. It carries out the reaction a lipid IVA + a 1,2-diacyl-sn-glycero-3-phosphocholine = a lipid IVB + a 2-acyl-sn-glycero-3-phosphocholine. The enzyme catalyses a lipid IIA + a 1,2-diacyl-sn-glycero-3-phosphocholine = a lipid IIB + a 2-acyl-sn-glycero-3-phosphocholine. In terms of biological role, transfers a fatty acid residue from the sn-1 position of a phospholipid to the N-linked hydroxyfatty acid chain on the proximal unit of lipid A or its precursors. The sequence is that of Lipid A acyltransferase PagP from Erwinia tasmaniensis (strain DSM 17950 / CFBP 7177 / CIP 109463 / NCPPB 4357 / Et1/99).